Here is an 898-residue protein sequence, read N- to C-terminus: Chloride channel protein 2 (898 aa).

Residue A2 is modified to N-acetylalanine. At 2 to 87 (AAAAAEEGME…RCHKFLVSRV (86 aa)) the chain is on the cytoplasmic side. The essential for channel gating by both voltage and cell volume stretch occupies residues 16-34 (QYEQTLMYGRYTQDLGAFA). Position 20 is a phosphothreonine (T20). The modulates channel gating by both voltage and cell volume stretch occupies residues 36-49 (EEAARIRLGGPEPW). The next 2 membrane-spanning stretches (helical) occupy residues 88 to 121 (GEDW…AQQW) and 130 to 155 (ILLQ…TQIL). A Selectivity filter part_1 motif is present at residues 161 to 165 (GSGIP). Chloride is bound at residue S162. Positions 164–171 (IPEMKTIL) form an intramembrane region, helical. Helical transmembrane passes span 180–198 (LTLK…ALGS) and 205–223 (EGPF…SKFL). Positions 203 to 207 (GKEGP) match the Selectivity filter part_2 motif. 2 intramembrane regions (helical) span residues 239–251 (MLAA…VGCC) and 255–263 (PIGGVLFSI). A run of 5 helical transmembrane segments spans residues 275–295 (YWRG…LAVW), 321–349 (LPAF…VQVM), 358–377 (FLMR…ISTL), 429–449 (ANVF…SALA), and 457–480 (GAFM…MAAW). The Selectivity filter part_3 signature appears at 457–461 (GAFMP). A chloride-binding site is contributed by F459. Residues 497–511 (GGYAVVGAAALAGAV) constitute an intramembrane region (helical). The segment at residues 512-513 (TH) is an intramembrane region (note=Loop between two helices). Residues 514 to 525 (TVSTAVIVFELT) constitute an intramembrane region (helical). The segment at residues 526-530 (GQIAH) is an intramembrane region (note=Loop between two helices). The helical transmembrane segment at 531-548 (ILPVMIAVILANAVAQSL) threads the bilayer. The Cytoplasmic portion of the chain corresponds to 549 to 898 (QPSLYDSIIR…SPSDSDDKCQ (350 aa)). Residue Y553 coordinates chloride. The CBS 1 domain maps to 584 to 642 (MVRDVPHVALSCTFRDLRLALHRTKGRMLALVESPESMILLGSIERSQVVALLGAQLSP). Disordered stretches follow at residues 643–672 (ARRR…PEAS) and 686–717 (AARG…TGSA). Residues 705–717 (VTRNLGESPTGSA) show a composition bias toward polar residues. Residues S712 and S758 each carry the phosphoserine modification. The CBS 2 domain maps to 790-850 (IDPAPFQLVE…GSVTAQGVKV (61 aa)). The Basolateral membrane sorting motif lies at 812 to 813 (LL). Positions 856-898 (SFRDSATSSSDTETTEVHALWGPHSRHGLPREGSPSDSDDKCQ) are disordered.

Belongs to the chloride channel (TC 2.A.49) family. ClC-2/CLCN2 subfamily. As to quaternary structure, homodimer. Interacts with auxiliary subunit HEPACAM. Phosphorylated. Activated by dephosphorylation. As to expression, ubiquitously expressed. Moderately expressed in aortic and coronary vascular smooth muscle cells and expressed at a low level in aortic endothelial cells. Expressed in the adrenal gland, predominantly in the zona glomerulosa. Expressed in white mater perivascular astrocytes and ependymal cells (at protein level).

It localises to the cell membrane. It is found in the basolateral cell membrane. The protein resides in the cell projection. Its subcellular location is the dendritic spine membrane. The protein localises to the axon. It catalyses the reaction chloride(in) = chloride(out). The enzyme catalyses thiocyanate(in) = thiocyanate(out). It carries out the reaction bromide(in) = bromide(out). The catalysed reaction is nitrate(in) = nitrate(out). It catalyses the reaction iodide(out) = iodide(in). Common gate kinetics are down-regulated by intracellular ATP. Inhibited by AK-42, a derivative of meclofenamate. Inhibited by Cd(2+). Inhibited by Zn(2+) and PKC activation. Inhibited at acidic pH. CCLN2:HEPACAM channel conductance is up-regulated upon hypo-osmolarity. Its function is as follows. Voltage-gated and osmosensitive chloride channel. Forms a homodimeric channel where each subunit has its own ion conduction pathway. Conducts double-barreled currents controlled by two types of gates, two fast glutamate gates that control each subunit independently and a slow common gate that opens and shuts off both subunits simultaneously. Displays inward rectification currents activated upon membrane hyperpolarization and extracellular hypotonicity. Contributes to chloride conductance involved in neuron excitability. In hippocampal neurons, generates a significant part of resting membrane conductance and provides an additional chloride efflux pathway to prevent chloride accumulation in dendrites upon GABA receptor activation. In glia, associates with the auxiliary subunit HEPACAM/GlialCAM at astrocytic processes and myelinated fiber tracts where it may regulate transcellular chloride flux buffering extracellular chloride and potassium concentrations. Regulates aldosterone production in adrenal glands. The opening of CLCN2 channels at hyperpolarized membrane potentials in the glomerulosa causes cell membrane depolarization, activation of voltage-gated calcium channels and increased expression of aldosterone synthase, the rate-limiting enzyme for aldosterone biosynthesis. Contributes to chloride conductance in retinal pigment epithelium involved in phagocytosis of shed photoreceptor outer segments and photoreceptor renewal. Conducts chloride currents at the basolateral membrane of epithelial cells with a role in chloride reabsorption rather than secretion. Permeable to small monovalent anions with chloride &gt; thiocyanate &gt; bromide &gt; nitrate &gt; iodide ion selectivity. This chain is Chloride channel protein 2, found in Homo sapiens (Human).